The primary structure comprises 206 residues: Large ribosomal subunit protein uL4 (206 aa).

The disordered stretch occupies residues 63–93 (MYKQKGTGRARHHSARAPQFRGGGKAHGPVV). Over residues 64-77 (YKQKGTGRARHHSA) the composition is skewed to basic residues.

The protein belongs to the universal ribosomal protein uL4 family. As to quaternary structure, part of the 50S ribosomal subunit.

Functionally, one of the primary rRNA binding proteins, this protein initially binds near the 5'-end of the 23S rRNA. It is important during the early stages of 50S assembly. It makes multiple contacts with different domains of the 23S rRNA in the assembled 50S subunit and ribosome. In terms of biological role, forms part of the polypeptide exit tunnel. This is Large ribosomal subunit protein uL4 from Sinorhizobium medicae (strain WSM419) (Ensifer medicae).